Reading from the N-terminus, the 472-residue chain is Argininosuccinate lyase (472 aa).

It belongs to the lyase 1 family. Argininosuccinate lyase subfamily.

The protein resides in the cytoplasm. It catalyses the reaction 2-(N(omega)-L-arginino)succinate = fumarate + L-arginine. The protein operates within amino-acid biosynthesis; L-arginine biosynthesis; L-arginine from L-ornithine and carbamoyl phosphate: step 3/3. In Polynucleobacter necessarius subsp. necessarius (strain STIR1), this protein is Argininosuccinate lyase.